We begin with the raw amino-acid sequence, 2368 residues long: Voltage-dependent P/Q-type calcium channel subunit alpha-1A (2368 aa).

Topologically, residues 1-100 are cytoplasmic; it reads MARFGDEMPG…KYAKKITEWP (100 aa). An I repeat occupies 65–365; it reads NPIPVRQNCL…LVLGVLSGEF (301 aa). Residues 101–119 traverse the membrane as a helical segment; sequence PFEYMILATIIANCIVLAL. Residues 120-138 are Extracellular-facing; sequence EQHLPDDDKTPMSERLDDT. The helical transmembrane segment at 139-156 threads the bilayer; that stretch reads EPYFIGIFCFEAGIKIVA. The Cytoplasmic segment spans residues 157–168; that stretch reads LGFAFHKGSYLR. Residues 169–184 form a helical membrane-spanning segment; it reads NGWNVMDFVVVLTGIL. The Extracellular portion of the chain corresponds to 185-192; the sequence is ATVGTEFD. Residues 193-211 traverse the membrane as a helical segment; it reads LRTLRAVRVLRPLKLVSGI. Topologically, residues 212-230 are cytoplasmic; sequence PSLQVVLKSIMKAMIPLLQ. A helical membrane pass occupies residues 231–250; it reads IGLLLFFAILIFAIIGLEFY. The Extracellular portion of the chain corresponds to 251 to 337; sequence MGKFHTTCFE…NSNDASGNTW (87 aa). An N-linked (GlcNAc...) asparagine glycan is attached at Asn-285. Position 320 (Glu-320) interacts with Ca(2+). The chain crosses the membrane as a helical span at residues 338–362; the sequence is NWLYFIPLIIIGSFFMLNLVLGVLS. Residues 363-489 are Cytoplasmic-facing; it reads GEFAKERERV…FYIRRMVKTQ (127 aa). The tract at residues 385–402 is binding to the beta subunit; that stretch reads QQIERELNGYMEWISKAE. The residue at position 411 (Thr-411) is a Phosphothreonine. Phosphoserine is present on residues Ser-450 and Ser-453. The stretch at 475–719 is one II repeat; sequence ERRMRFYIRR…VFLAIAVDNL (245 aa). Residues 490–509 traverse the membrane as a helical segment; the sequence is AFYWTVLSLVALNTLCVAIV. Residues 510-523 are Extracellular-facing; sequence HYNQPEWLSDFLYY. Residues 524 to 543 traverse the membrane as a helical segment; it reads AEFIFLGLFMSEMFIKMYGL. The Cytoplasmic portion of the chain corresponds to 544 to 551; the sequence is GTRPYFHS. Residues 552–570 form a helical membrane-spanning segment; that stretch reads SFNCFDCGVIIGSIFEVIW. At 571–580 the chain is on the extracellular side; sequence AVIKPGTSFG. Residues 581 to 599 traverse the membrane as a helical segment; sequence ISVLRALRLLRIFKVTKYW. Over 600 to 618 the chain is Cytoplasmic; it reads ASLRNLVVSLLNSMKSIIS. The chain crosses the membrane as a helical span at residues 619–638; sequence LLFLLFLFIVVFALLGMQLF. The Extracellular portion of the chain corresponds to 639 to 691; sequence GGQFNFDEGTPPTNFDTFPAAIMTVFQILTGEDWNEVMYDGIKSQGGVQGGMV. Glu-670 lines the Ca(2+) pocket. Residues 692–716 traverse the membrane as a helical segment; sequence FSIYFIVLTLFGNYTLLNVFLAIAV. The Cytoplasmic portion of the chain corresponds to 717–1190; that stretch reads DNLANAQELT…TNPLRRLCHY (474 aa). 2 positions are modified to phosphoserine: Ser-752 and Ser-755. The tract at residues 762 to 781 is disordered; sequence AVKEQQKNQKPTKSVWEQRT. The span at 769–779 shows a compositional bias: polar residues; that stretch reads NQKPTKSVWEQ. At Ser-792 the chain carries Phosphoserine. 2 disordered regions span residues 823–1117 and 1137–1170; these read PLVV…RKPE and VNKNANPDPLPKKEEEKKEEEEADPGEDGPKPMP. Composition is skewed to basic and acidic residues over residues 850–862, 871–924, and 932–958; these read RPRESARDPDARR, APGR…EGEP, and RPGDEPDDRPERRPRPRDATRPARAAD. 3 positions are modified to phosphoserine: Ser-1038, Ser-1042, and Ser-1051. Positions 1056-1073 are enriched in polar residues; that stretch reads GNSTNPGPALATNPQNAA. Residues 1074 to 1083 are compositionally biased toward low complexity; that stretch reads SRRTPNNPGN. The segment covering 1094–1111 has biased composition (polar residues); the sequence is ENSLIVTNPSSTQPNSAK. Residues 1153-1163 are compositionally biased toward acidic residues; it reads KKEEEEADPGE. Residues 1182–1465 form an III repeat; sequence NPLRRLCHYI…IFVALIIITF (284 aa). The chain crosses the membrane as a helical span at residues 1191-1214; the sequence is ILNLRYFEMCILMVIAMSSIALAA. The Extracellular segment spans residues 1215–1231; sequence EDPVQPNAPRNNVLRYF. The helical transmembrane segment at 1232–1251 threads the bilayer; it reads DYVFTGVFTFEMVIKMIDLG. Residues 1252-1258 lie on the Cytoplasmic side of the membrane; sequence LVLHQGA. Residues 1259–1282 traverse the membrane as a helical segment; that stretch reads YFRDLWNILDFIVVSGALVAFAFT. The Extracellular segment spans residues 1283–1293; that stretch reads GNSKGKDINTI. Residues 1294 to 1311 traverse the membrane as a helical segment; sequence KSLRVLRVLRPLKTIKRL. Residues 1312–1330 are Cytoplasmic-facing; sequence PKLKAVFDCVVNSLKNVFN. The helical transmembrane segment at 1331–1350 threads the bilayer; sequence ILIVYMLFMFIFAVVAVQLF. At 1351-1437 the chain is on the extracellular side; sequence KGKFFHCTDE…QGPSPGYRME (87 aa). Glu-1411 lines the Ca(2+) pocket. A helical membrane pass occupies residues 1438-1462; sequence MSIFYVVYFVVFPFFFVNIFVALII. Residues 1463–1518 are Cytoplasmic-facing; sequence ITFQEQGDKMMEEYSLEKNERACIDFAISAKPLTRHMPQNKQSFQYRMWQFVVSPP. Residues 1502–1765 form an IV repeat; the sequence is NKQSFQYRMW…LFVAVIMDNF (264 aa). The helical transmembrane segment at 1519–1537 threads the bilayer; the sequence is FEYTIMAMIALNTIVLMMK. The Extracellular portion of the chain corresponds to 1538-1551; that stretch reads FYGASVAYENALRV. The chain crosses the membrane as a helical span at residues 1552–1573; sequence FNIVFTSLFSLECVLKVMAFGI. The Cytoplasmic segment spans residues 1574–1580; the sequence is LNYFRDA. A helical membrane pass occupies residues 1581 to 1600; it reads WNIFDFVTVLGSITDILVTE. The Extracellular segment spans residues 1601–1607; it reads FGNNFIN. N-linked (GlcNAc...) asparagine glycosylation is present at Asn-1607. A helical membrane pass occupies residues 1608–1626; it reads LSFLRLFRAARLIKLLRQG. Residues 1627 to 1645 lie on the Cytoplasmic side of the membrane; that stretch reads YTIRILLWTFVQSFKALPY. A helical transmembrane segment spans residues 1646–1665; the sequence is VCLLIAMLFFIYAIIGMQVF. The Extracellular segment spans residues 1666-1737; that stretch reads GNIGIDGEDE…ILTADCGNEF (72 aa). A helical transmembrane segment spans residues 1738 to 1763; that stretch reads AYFYFVSFIFLCSFLMLNLFVAVIMD. The Cytoplasmic portion of the chain corresponds to 1764 to 2368; that stretch reads NFEYLTRDSS…AYSESEDDWC (605 aa). Position 1935 is a phosphothreonine (Thr-1935). The interval 1940–2368 is disordered; the sequence is QRMEPPSPTQ…AYSESEDDWC (429 aa). 2 stretches are compositionally biased toward polar residues: residues 1948-1963 and 1981-1997; these read TQEGGPSQNALPSTQL and SWVTQRAQEMFQKTGTW. A phosphoserine mark is found at Ser-1998, Ser-2016, Ser-2028, Ser-2030, Ser-2071, and Ser-2091. Positions 2008–2017 are enriched in polar residues; that stretch reads PNSQPNSQSV. Over residues 2018 to 2034 the composition is skewed to basic and acidic residues; sequence EMREMGTDGYSDSEHYL. Over residues 2063–2073 the composition is skewed to polar residues; sequence DLSTISDTSPM. Basic and acidic residues-rich tracts occupy residues 2085 to 2102 and 2143 to 2153; these read RRLDDYSLERVPPEENQR and PSKDRDQDRGR. Basic residues predominate over residues 2154–2172; that stretch reads PKDRKHRPHHHHHHHHHHP. Basic and acidic residues predominate over residues 2173–2209; sequence PAPDRDRYAQERPDTGRARAREQRWSRSPSEGREHTT. The span at 2213–2231 shows a compositional bias: low complexity; the sequence is GSSSVSGSPAPSTSGTSTP. Positions 2289–2305 are enriched in basic and acidic residues; it reads EGPRPRGADYTEPDSPR.

The protein belongs to the calcium channel alpha-1 subunit (TC 1.A.1.11) family. CACNA1A subfamily. As to quaternary structure, voltage-dependent calcium channels are multisubunit complexes, consisting of alpha-1, alpha-2, beta and delta subunits in a 1:1:1:1 ratio. The channel activity is directed by the pore-forming and voltage-sensitive alpha-1 subunit. In many cases, this subunit is sufficient to generate voltage-sensitive calcium channel activity. The auxiliary subunits beta and alpha-2/delta linked by a disulfide bridge regulate the channel activity. Interacts with CABP1. Interacts with the spider omega-agatoxin-IVA (AC P30288). Interacts with TSPOAP1. As to expression, brain specific; mainly found in the cerebellum, olfactory bulb, cerebral cortex, hippocampus, and inferior colliculus. In the hippocampus, expression occurs in pyramidal and granule neurons, as well as in interneurons. Purkinje cells contain predominantly P-type VSCC, the Q-type being a prominent calcium current in cerebellar granule cells.

It localises to the cell membrane. The enzyme catalyses Ca(2+)(in) = Ca(2+)(out). In terms of biological role, voltage-sensitive calcium channels (VSCC) mediate the entry of calcium ions into excitable cells and are also involved in a variety of calcium-dependent processes, including muscle contraction, hormone or neurotransmitter release, gene expression, cell motility, cell division and cell death. The isoform alpha-1A gives rise to P and/or Q-type calcium currents. P/Q-type calcium channels belong to the 'high-voltage activated' (HVA) group and are specifically blocked by the spider omega-agatoxin-IVA (AC P54282). They are however insensitive to dihydropyridines (DHP). The polypeptide is Voltage-dependent P/Q-type calcium channel subunit alpha-1A (Mus musculus (Mouse)).